A 60-amino-acid polypeptide reads, in one-letter code: Anionic antimicrobial peptide 2 (60 aa).

As to expression, hemolymph.

The protein resides in the secreted. Antimicrobial protein. Has antibacterial activity against the Gram-positive bacteria M.luteus (MIC=86.6 uM), L.monocytogenes (MIC=86.6 uM), and S.lutea (MIC=86.6 uM). Lacks antibacterial activity against the Gram-positive bacteria B.circulans and S.aureus, and the Gram-negative bacteria E.coli D31, E.coli ATCC 25922, and S.typhimurium. Has antifungal activity against P.pastoris (MIC=86.6 uM) and P.stipitis (MIC=90.9 uM), but lacks antifungal activity against A.niger, C.albicans, C.albidus, C.fructus, C.wickerhamii, F.oxysporum, S.cerevisiae, S.pombe, T.harzianum, and Z.marxianus. The polypeptide is Anionic antimicrobial peptide 2 (Galleria mellonella (Greater wax moth)).